The primary structure comprises 542 residues: Glutamyl-tRNA(Gln) amidotransferase subunit B, mitochondrial (542 aa).

Belongs to the GatB/GatE family. GatB subfamily. As to quaternary structure, subunit of the heterotrimeric GatFAB amidotransferase (AdT) complex, composed of A, B and F subunits.

It localises to the mitochondrion. It carries out the reaction L-glutamyl-tRNA(Gln) + L-glutamine + ATP + H2O = L-glutaminyl-tRNA(Gln) + L-glutamate + ADP + phosphate + H(+). Its function is as follows. Allows the formation of correctly charged Gln-tRNA(Gln) through the transamidation of misacylated Glu-tRNA(Gln) in the mitochondria. The reaction takes place in the presence of glutamine and ATP through an activated gamma-phospho-Glu-tRNA(Gln). The sequence is that of Glutamyl-tRNA(Gln) amidotransferase subunit B, mitochondrial from Candida glabrata (strain ATCC 2001 / BCRC 20586 / JCM 3761 / NBRC 0622 / NRRL Y-65 / CBS 138) (Yeast).